Consider the following 131-residue polypeptide: Protein FON2 SPARE1 (131 aa).

Residues 1–22 (MSRRLGAAAAVLLLWLAVLTFA) form the signal peptide. Residues 67 to 131 (SPSSLTTTDR…VPTGPNPLHH (65 aa)) are disordered. Residues 76-97 (RHHHHHRHHGHHHHRGHDRWNR) are compositionally biased toward basic residues.

Belongs to the CLV3/ESR signal peptide family. Expressed in all aerial apical meristems, including the floral and inflorescence meristems in the reproductive phase and the shoot apical meristem in the vegetative phase. Also detected in the primordia of lateral organs such as the leaf and the floral organs.

It is found in the secreted. Involved in the maintenance of the floral meristem and of the shoot apical meristem in the vegetative phase. Suppresses the fon2 mutation and acts independently of FON1. In Oryza sativa subsp. japonica, the protein has a single amino acid substitution at the putative processing site of the signal peptide and is inactive. The polypeptide is Protein FON2 SPARE1 (FOS1) (Oryza sativa subsp. indica (Rice)).